Consider the following 353-residue polypeptide: S-adenosylmethionine:tRNA ribosyltransferase-isomerase (353 aa).

Belongs to the QueA family. Monomer.

It is found in the cytoplasm. It catalyses the reaction 7-aminomethyl-7-carbaguanosine(34) in tRNA + S-adenosyl-L-methionine = epoxyqueuosine(34) in tRNA + adenine + L-methionine + 2 H(+). It functions in the pathway tRNA modification; tRNA-queuosine biosynthesis. In terms of biological role, transfers and isomerizes the ribose moiety from AdoMet to the 7-aminomethyl group of 7-deazaguanine (preQ1-tRNA) to give epoxyqueuosine (oQ-tRNA). In Maricaulis maris (strain MCS10) (Caulobacter maris), this protein is S-adenosylmethionine:tRNA ribosyltransferase-isomerase.